The following is a 420-amino-acid chain: UDP-N-acetylglucosamine 1-carboxyvinyltransferase 1 (420 aa).

A phosphoenolpyruvate-binding site is contributed by 22–23 (KN). A UDP-N-acetyl-alpha-D-glucosamine-binding site is contributed by Arg91. Cys115 serves as the catalytic Proton donor. Cys115 carries the post-translational modification 2-(S-cysteinyl)pyruvic acid O-phosphothioketal. UDP-N-acetyl-alpha-D-glucosamine contacts are provided by residues 120–124 (RPMDL), Asp303, and Val325.

It belongs to the EPSP synthase family. MurA subfamily.

The protein resides in the cytoplasm. It catalyses the reaction phosphoenolpyruvate + UDP-N-acetyl-alpha-D-glucosamine = UDP-N-acetyl-3-O-(1-carboxyvinyl)-alpha-D-glucosamine + phosphate. It functions in the pathway cell wall biogenesis; peptidoglycan biosynthesis. Its function is as follows. Cell wall formation. Adds enolpyruvyl to UDP-N-acetylglucosamine. The chain is UDP-N-acetylglucosamine 1-carboxyvinyltransferase 1 from Carboxydothermus hydrogenoformans (strain ATCC BAA-161 / DSM 6008 / Z-2901).